A 267-amino-acid chain; its full sequence is Hydroxynaphthalene reductase-like protein Arp2 (267 aa).

NADP(+) contacts are provided by I25, N45, D71, and N98. Active-site proton donor residues include S147 and S148. Y162, K166, V195, and T197 together coordinate NADP(+). The active-site Proton acceptor is the Y162. Residue K166 is the Lowers pKa of active site Tyr of the active site.

It belongs to the short-chain dehydrogenases/reductases (SDR) family.

In terms of biological role, hydroxynaphthalene reductase-like protein; part of the Pks2 gene cluster that mediates the formation of infectious structures (appressoria), enabling these fungi to kill insects faster. The product of the Pks2 gene cluster is different from the one of Pks1 and has still not been identified. This Metarhizium brunneum (strain ARSEF 3297) protein is Hydroxynaphthalene reductase-like protein Arp2.